The primary structure comprises 335 residues: Pyridoxal 5'-phosphate synthase subunit PdxS (335 aa).

Aspartate 30 provides a ligand contact to D-ribose 5-phosphate. The Schiff-base intermediate with D-ribose 5-phosphate role is filled by lysine 87. A D-ribose 5-phosphate-binding site is contributed by glycine 159. Arginine 171 provides a ligand contact to D-glyceraldehyde 3-phosphate. D-ribose 5-phosphate is bound by residues glycine 257 and 278–279 (GS).

This sequence belongs to the PdxS/SNZ family. Homohexamer. In the presence of PdxT, forms a dodecamer of heterodimers.

The catalysed reaction is aldehydo-D-ribose 5-phosphate + D-glyceraldehyde 3-phosphate + L-glutamine = pyridoxal 5'-phosphate + L-glutamate + phosphate + 3 H2O + H(+). It functions in the pathway cofactor biosynthesis; pyridoxal 5'-phosphate biosynthesis. Functionally, catalyzes the formation of pyridoxal 5'-phosphate from ribose 5-phosphate (RBP), glyceraldehyde 3-phosphate (G3P) and ammonia. The ammonia is provided by the PdxT subunit. Can also use ribulose 5-phosphate and dihydroxyacetone phosphate as substrates, resulting from enzyme-catalyzed isomerization of RBP and G3P, respectively. This Pyrococcus horikoshii (strain ATCC 700860 / DSM 12428 / JCM 9974 / NBRC 100139 / OT-3) protein is Pyridoxal 5'-phosphate synthase subunit PdxS.